We begin with the raw amino-acid sequence, 663 residues long: Innate immunity activator protein (663 aa).

The tract at residues 1–68 (MLQMPKLNEI…RLPTQPGPGW (68 aa)) is disordered. The segment covering 40-50 (RAQGQAGGARA) has biased composition (low complexity). A coiled-coil region spans residues 118–147 (AVHKQQRALEARLEACLEELRRLCLREAEL). The Nuclear localization signal (NLS) 1 signature appears at 164 to 170 (PKVRRRI). Disordered stretches follow at residues 242 to 362 (RRRN…ASSL), 378 to 425 (VPGQ…PRRR), and 444 to 493 (PLPH…RHRG). The segment covering 259-272 (ELSASDDSSLSDGL) has biased composition (low complexity). Residues 282–298 (PKPPPESPAPPSRPLPP) are compositionally biased toward pro residues. Residues 327–340 (TSLDHPYEKPRKSS) show a composition bias toward basic and acidic residues. A Nuclear localization signal (NLS) 2 motif is present at residues 332-338 (PYEKPRK). The segment covering 350–361 (ATTPQDGPSASS) has biased composition (polar residues). The short motif at 422–428 (PRRRPTH) is the Nuclear localization signal (NLS) 3 element. Residues 455–475 (EDSGSDVSSISHPTSPGSSSP) show a composition bias toward low complexity.

Interacts with IRAK1, NOD2 and RIPK2; the interaction takes place upon PRR stimulation. Interacts with YWHAQ/14-3-3T; the interaction increases upon PRR stimulation and is required for cellular signaling pathway activation and cytokine secretion. Interacts (via N-terminal domain) with CYTH1 and CYTH2 (via their N-terminal domains). Interacts with FBXW11 and BTRC; associates with SCF E3 ubiquitin-protein ligase complexes. In terms of tissue distribution, highly expressed in intestinal myeloid-derived cells and expressed in monocyte-derived macrophages upon induction by PRR activation.

It localises to the nucleus. Its subcellular location is the cytoplasm. Functionally, expressed in peripheral macrophages and intestinal myeloid-derived cells, is required for optimal PRR (pattern recognition receptor)-induced signaling, cytokine secretion, and bacterial clearance. Upon stimulation of a broad range of PRRs (pattern recognition receptor) such as NOD2 or TLR2, TLR3, TLR4, TLR5, TLR7 and TLR9, associates with YWHAQ/14-3-3T, which in turn leads to the recruitment and activation of MAP kinases and NF-kappa-B signaling complexes that amplifies PRR-induced downstream signals and cytokine secretion. In the intestine, regulates adherens junction stability by regulating the degradation of CYTH1 and CYTH2, probably acting as substrate cofactor for SCF E3 ubiquitin-protein ligase complexes. Stabilizes adherens junctions by limiting CYTH1-dependent ARF6 activation. This is Innate immunity activator protein from Homo sapiens (Human).